The sequence spans 259 residues: Pro-opiomelanocortin (259 aa).

The signal sequence occupies residues 1-22 (MLRSVWVYSLGLAVLLQQSGRE). Q23 carries the pyrrolidone carboxylic acid modification. 2 cysteine pairs are disulfide-bonded: C24-C46 and C30-C42. The disordered stretch occupies residues 113–142 (PQAEEEMEESESSQQQRREDKRSYSMEHFR). The span at 128–142 (QRREDKRSYSMEHFR) shows a compositional bias: basic and acidic residues. Residue V147 is modified to Valine amide.

It belongs to the POMC family. Post-translationally, specific enzymatic cleavages at paired basic residues yield the different active peptides.

It is found in the secreted. Its function is as follows. Stimulates the adrenal glands to release cortisol. In terms of biological role, anorexigenic peptide. Increases the pigmentation of skin by increasing melanin production in melanocytes. Increases the pigmentation of skin by increasing melanin production in melanocytes. Functionally, endogenous orexigenic opiate. Its function is as follows. Endogenous opiate. The protein is Pro-opiomelanocortin (pomc) of Lepisosteus osseus (Long-nosed gar).